Here is a 388-residue protein sequence, read N- to C-terminus: Queuine tRNA-ribosyltransferase (388 aa).

Asp91 acts as the Proton acceptor in catalysis. Residues 91 to 95 (DSGGY), Asp145, Gln190, and Gly217 each bind substrate. Residues 248-254 (GVGAPED) are RNA binding. The Nucleophile role is filled by Asp267. The tract at residues 272–276 (TRLAR) is RNA binding; important for wobble base 34 recognition. Positions 305, 307, 310, and 336 each coordinate Zn(2+).

The protein belongs to the queuine tRNA-ribosyltransferase family. In terms of assembly, homodimer. Within each dimer, one monomer is responsible for RNA recognition and catalysis, while the other monomer binds to the replacement base PreQ1. Zn(2+) is required as a cofactor.

It catalyses the reaction 7-aminomethyl-7-carbaguanine + guanosine(34) in tRNA = 7-aminomethyl-7-carbaguanosine(34) in tRNA + guanine. It participates in tRNA modification; tRNA-queuosine biosynthesis. Functionally, catalyzes the base-exchange of a guanine (G) residue with the queuine precursor 7-aminomethyl-7-deazaguanine (PreQ1) at position 34 (anticodon wobble position) in tRNAs with GU(N) anticodons (tRNA-Asp, -Asn, -His and -Tyr). Catalysis occurs through a double-displacement mechanism. The nucleophile active site attacks the C1' of nucleotide 34 to detach the guanine base from the RNA, forming a covalent enzyme-RNA intermediate. The proton acceptor active site deprotonates the incoming PreQ1, allowing a nucleophilic attack on the C1' of the ribose to form the product. After dissociation, two additional enzymatic reactions on the tRNA convert PreQ1 to queuine (Q), resulting in the hypermodified nucleoside queuosine (7-(((4,5-cis-dihydroxy-2-cyclopenten-1-yl)amino)methyl)-7-deazaguanosine). This is Queuine tRNA-ribosyltransferase from Dictyoglomus turgidum (strain DSM 6724 / Z-1310).